The chain runs to 251 residues: Phosphate import ATP-binding protein PstB (251 aa).

The ABC transporter domain occupies 5–246; sequence FDIRNFSVYY…PEKELTEKYL (242 aa). Position 37 to 44 (37 to 44) interacts with ATP; that stretch reads GPSGCGKS.

This sequence belongs to the ABC transporter superfamily. Phosphate importer (TC 3.A.1.7) family. The complex is composed of two ATP-binding proteins (PstB), two transmembrane proteins (PstC and PstA) and a solute-binding protein (PstS).

Its subcellular location is the cell membrane. It catalyses the reaction phosphate(out) + ATP + H2O = ADP + 2 phosphate(in) + H(+). Functionally, part of the ABC transporter complex PstSACB involved in phosphate import. Responsible for energy coupling to the transport system. The chain is Phosphate import ATP-binding protein PstB from Archaeoglobus fulgidus (strain ATCC 49558 / DSM 4304 / JCM 9628 / NBRC 100126 / VC-16).